The primary structure comprises 246 residues: Probable hydroxyethylthiazole kinase (246 aa).

A substrate-binding site is contributed by Met50. Positions 125 and 145 each coordinate ATP. A substrate-binding site is contributed by Gly172.

The protein belongs to the Thz kinase family. Mg(2+) serves as cofactor.

It catalyses the reaction 5-(2-hydroxyethyl)-4-methylthiazole + ATP = 4-methyl-5-(2-phosphooxyethyl)-thiazole + ADP + H(+). It participates in cofactor biosynthesis; thiamine diphosphate biosynthesis; 4-methyl-5-(2-phosphoethyl)-thiazole from 5-(2-hydroxyethyl)-4-methylthiazole: step 1/1. Its function is as follows. Catalyzes the phosphorylation of the hydroxyl group of 4-methyl-5-beta-hydroxyethylthiazole (THZ). This Agrobacterium fabrum (strain C58 / ATCC 33970) (Agrobacterium tumefaciens (strain C58)) protein is Probable hydroxyethylthiazole kinase (thiM).